A 333-amino-acid chain; its full sequence is Holliday junction branch migration complex subunit RuvB (333 aa).

The tract at residues 1–173 (MTAPENLDAA…FGIIEHLEYY (173 aa)) is large ATPase domain (RuvB-L). Residues Leu11, Arg12, Gly53, Lys56, Thr57, Thr58, 120–122 (EDF), Arg163, Tyr173, and Arg210 contribute to the ATP site. Mg(2+) is bound at residue Thr57. The interval 174–244 (TAEEIATNLL…RAQSALDKLG (71 aa)) is small ATPAse domain (RuvB-S). Positions 247–333 (SAGLDDRDKK…IDDGNGIFLN (87 aa)) are head domain (RuvB-H). Residues Arg302 and Arg307 each coordinate DNA.

The protein belongs to the RuvB family. As to quaternary structure, homohexamer. Forms an RuvA(8)-RuvB(12)-Holliday junction (HJ) complex. HJ DNA is sandwiched between 2 RuvA tetramers; dsDNA enters through RuvA and exits via RuvB. An RuvB hexamer assembles on each DNA strand where it exits the tetramer. Each RuvB hexamer is contacted by two RuvA subunits (via domain III) on 2 adjacent RuvB subunits; this complex drives branch migration. In the full resolvosome a probable DNA-RuvA(4)-RuvB(12)-RuvC(2) complex forms which resolves the HJ.

It localises to the cytoplasm. The catalysed reaction is ATP + H2O = ADP + phosphate + H(+). Functionally, the RuvA-RuvB-RuvC complex processes Holliday junction (HJ) DNA during genetic recombination and DNA repair, while the RuvA-RuvB complex plays an important role in the rescue of blocked DNA replication forks via replication fork reversal (RFR). RuvA specifically binds to HJ cruciform DNA, conferring on it an open structure. The RuvB hexamer acts as an ATP-dependent pump, pulling dsDNA into and through the RuvAB complex. RuvB forms 2 homohexamers on either side of HJ DNA bound by 1 or 2 RuvA tetramers; 4 subunits per hexamer contact DNA at a time. Coordinated motions by a converter formed by DNA-disengaged RuvB subunits stimulates ATP hydrolysis and nucleotide exchange. Immobilization of the converter enables RuvB to convert the ATP-contained energy into a lever motion, pulling 2 nucleotides of DNA out of the RuvA tetramer per ATP hydrolyzed, thus driving DNA branch migration. The RuvB motors rotate together with the DNA substrate, which together with the progressing nucleotide cycle form the mechanistic basis for DNA recombination by continuous HJ branch migration. Branch migration allows RuvC to scan DNA until it finds its consensus sequence, where it cleaves and resolves cruciform DNA. The protein is Holliday junction branch migration complex subunit RuvB of Deinococcus radiodurans (strain ATCC 13939 / DSM 20539 / JCM 16871 / CCUG 27074 / LMG 4051 / NBRC 15346 / NCIMB 9279 / VKM B-1422 / R1).